Here is a 266-residue protein sequence, read N- to C-terminus: E3 ubiquitin-protein ligase RNF170 (266 aa).

Topologically, residues 1–26 (MEGSVCVDGAAAPAPDEASLIEGVSN) are lumenal. The chain crosses the membrane as a helical span at residues 27–47 (AVLLVLVLSVTLLAGLTTLLC). Over 48-209 (RSEQQRIHPE…GGLFWMFRVR (162 aa)) the chain is Cytoplasmic. The RING-type zinc-finger motif lies at 88-131 (CPVCLQQAVLPVETNCGHLFCGSCIIAYWRYGTWLGAISCPICR). Residues 210-230 (ILLCVCGALAYLVSPLDFLPE) traverse the membrane as a helical segment. Gly231 is a topological domain (lumenal). The helical transmembrane segment at 232-252 (VLGLLGFLDDFFVILLLFIYI) threads the bilayer. Over 253–266 (SIMYREVVTQRLAG) the chain is Cytoplasmic.

Highly expressed in the developing brain, and less within intersomitic structures of the trunk.

The protein resides in the endoplasmic reticulum membrane. It carries out the reaction S-ubiquitinyl-[E2 ubiquitin-conjugating enzyme]-L-cysteine + [acceptor protein]-L-lysine = [E2 ubiquitin-conjugating enzyme]-L-cysteine + N(6)-ubiquitinyl-[acceptor protein]-L-lysine.. It participates in protein modification; protein ubiquitination. In terms of biological role, E3 ubiquitin-protein ligase that plays an essential role in stimulus-induced inositol 1,4,5-trisphosphate receptor (ITPR) ubiquitination and degradation via the endoplasmic reticulum-associated degradation (ERAD) pathway. Also involved in ITPR turnover in resting cells. This is E3 ubiquitin-protein ligase RNF170 (rnf170) from Danio rerio (Zebrafish).